Here is a 260-residue protein sequence, read N- to C-terminus: Proteasome subunit alpha (260 aa).

This sequence belongs to the peptidase T1A family. In terms of assembly, the 20S proteasome core is composed of 14 alpha and 14 beta subunits that assemble into four stacked heptameric rings, resulting in a barrel-shaped structure. The two inner rings, each composed of seven catalytic beta subunits, are sandwiched by two outer rings, each composed of seven alpha subunits. The catalytic chamber with the active sites is on the inside of the barrel. Has a gated structure, the ends of the cylinder being occluded by the N-termini of the alpha-subunits. Is capped at one or both ends by the proteasome regulatory ATPase, PAN.

It is found in the cytoplasm. The formation of the proteasomal ATPase PAN-20S proteasome complex, via the docking of the C-termini of PAN into the intersubunit pockets in the alpha-rings, triggers opening of the gate for substrate entry. Interconversion between the open-gate and close-gate conformations leads to a dynamic regulation of the 20S proteasome proteolysis activity. Component of the proteasome core, a large protease complex with broad specificity involved in protein degradation. The sequence is that of Proteasome subunit alpha from Thermococcus gammatolerans (strain DSM 15229 / JCM 11827 / EJ3).